Reading from the N-terminus, the 493-residue chain is Protein nucleotidyltransferase YdiU (493 aa).

8 residues coordinate ATP: Gly-94, Gly-96, Arg-97, Lys-117, Asp-129, Gly-130, Arg-180, and Arg-187. The active-site Proton acceptor is Asp-256. Mg(2+) contacts are provided by Asn-257 and Asp-266. Asp-266 serves as a coordination point for ATP.

It belongs to the SELO family. The cofactor is Mg(2+). Mn(2+) is required as a cofactor.

The enzyme catalyses L-seryl-[protein] + ATP = 3-O-(5'-adenylyl)-L-seryl-[protein] + diphosphate. It catalyses the reaction L-threonyl-[protein] + ATP = 3-O-(5'-adenylyl)-L-threonyl-[protein] + diphosphate. The catalysed reaction is L-tyrosyl-[protein] + ATP = O-(5'-adenylyl)-L-tyrosyl-[protein] + diphosphate. It carries out the reaction L-histidyl-[protein] + UTP = N(tele)-(5'-uridylyl)-L-histidyl-[protein] + diphosphate. The enzyme catalyses L-seryl-[protein] + UTP = O-(5'-uridylyl)-L-seryl-[protein] + diphosphate. It catalyses the reaction L-tyrosyl-[protein] + UTP = O-(5'-uridylyl)-L-tyrosyl-[protein] + diphosphate. Nucleotidyltransferase involved in the post-translational modification of proteins. It can catalyze the addition of adenosine monophosphate (AMP) or uridine monophosphate (UMP) to a protein, resulting in modifications known as AMPylation and UMPylation. This chain is Protein nucleotidyltransferase YdiU, found in Hahella chejuensis (strain KCTC 2396).